The primary structure comprises 78 residues: MSKVCQVTGKRPITGHNVSHAKNHTKRRFLPNLQTHRFWVEAEKRFVTLRLTPKGMRIIDKLGIEAVLADIRARGEKV.

A disordered region spans residues 1-21; the sequence is MSKVCQVTGKRPITGHNVSHA.

Belongs to the bacterial ribosomal protein bL28 family.

The polypeptide is Large ribosomal subunit protein bL28 (Cellvibrio japonicus (strain Ueda107) (Pseudomonas fluorescens subsp. cellulosa)).